The primary structure comprises 122 residues: Basic phospholipase A2 LmTX-II (122 aa).

6 disulfide bridges follow: Cys-26-Cys-115, Cys-28-Cys-44, Cys-43-Cys-95, Cys-49-Cys-122, Cys-50-Cys-88, and Cys-75-Cys-86. 3 residues coordinate Ca(2+): Tyr-27, Gly-29, and Gly-31. Residue His-47 is part of the active site. Asp-48 serves as a coordination point for Ca(2+). Asp-89 is a catalytic residue.

Monomer. It depends on Ca(2+) as a cofactor. In terms of tissue distribution, expressed by the venom gland.

It is found in the secreted. It carries out the reaction a 1,2-diacyl-sn-glycero-3-phosphocholine + H2O = a 1-acyl-sn-glycero-3-phosphocholine + a fatty acid + H(+). Functionally, snake venom phospholipase A2 (PLA2) that may display neurotoxic and myotoxic activities. May induce inflammatory edema by mechanisms involving mast cell activation and arachidonic acid metabolites. May increase plasma creatine kinase activity. PLA2 catalyzes the calcium-dependent hydrolysis of the 2-acyl groups in 3-sn-phosphoglycerides. This is Basic phospholipase A2 LmTX-II from Lachesis muta muta (Bushmaster).